A 115-amino-acid chain; its full sequence is Divalent-cation tolerance protein CutA (115 aa).

Residues cysteine 19, histidine 86, and histidine 87 each contribute to the Cu cation site.

The protein belongs to the CutA family. In terms of assembly, homotrimer. The cofactor is Cu cation.

It is found in the cytoplasm. Involved in resistance toward heavy metals. The sequence is that of Divalent-cation tolerance protein CutA from Salmonella agona (strain SL483).